The following is a 279-amino-acid chain: Energy-coupling factor transporter ATP-binding protein EcfA1 (279 aa).

In terms of domain architecture, ABC transporter spans 5–240; it reads IELKKVTFNY…GDELLQLGLD (236 aa). An ATP-binding site is contributed by 40-47; sequence GHNGSGKS.

This sequence belongs to the ABC transporter superfamily. Energy-coupling factor EcfA family. In terms of assembly, forms a stable energy-coupling factor (ECF) transporter complex composed of 2 membrane-embedded substrate-binding proteins (S component), 2 ATP-binding proteins (A component) and 2 transmembrane proteins (T component).

It localises to the cell membrane. Its function is as follows. ATP-binding (A) component of a common energy-coupling factor (ECF) ABC-transporter complex. Unlike classic ABC transporters this ECF transporter provides the energy necessary to transport a number of different substrates. This is Energy-coupling factor transporter ATP-binding protein EcfA1 from Streptococcus pyogenes serotype M12 (strain MGAS2096).